Consider the following 693-residue polypeptide: MLKLFSAFRKDRIWDFDGGIHPPEMKTQSSQTPLRQISLPEQFIIPLKQHLGPEGEICVSVGDKVLRGQPLTRGKGRTLPVHAPTSGTVNAIRQHTTAHPSGLSELSIIIVPDGEDRWCERLTYRDYRAQSVDTLLAHLHQAGIAGLGGAGFPTAAKLQGGMRGIETLIINGAECEPYITADDRLMQECADEIIQGVEILSFLLQPKRILIGIEDNKPEAISALRLALGKRSDMQLRVIPTKYPSGGAKQLTKILTGKEVPFGKHSAAIGVLMQNVGTAYAIKRAVIDGEPLTERVVTLTGEALRQPGNVWARLGTPVRHLLKQGGFHVTKQPMVVMGGPLMGFTLPLLDVPIVKISNCLLAPSHSEMEPVAEEQSCIRCSKCADACPAGLLPQQLYWFSRGQEHEKARDHHLFDCIECGACAYVCPSNIPLVQYYRQEKAEIRAIDEDAQRAALAKVRFDAKQARLEREKAARELRHKQAAAGVSTSDKDAVQAALERVRRKQTAEAEIGSPITVIPDAQPDNSAAIAARAAHKALVREERVREKQSQQETPATEVTPEELDPRKAAVAAALARVKARKAAQQSELNTTESVSSAIPDTAAEPIAVVEAQEQEDPRKAAVAAAIARVKARKAAQQLVTNVEAAVPVVTETTAEPIAVVEVQEPEDPRKAAVAAAIARVKARKAAQASSYQEE.

4Fe-4S ferredoxin-type domains follow at residues 368 to 397 and 407 to 436; these read MEPVAEEQSCIRCSKCADACPAGLLPQQLY and KARDHHLFDCIECGACAYVCPSNIPLVQYY. Residues Cys377, Cys380, Cys383, Cys387, Cys416, Cys419, Cys422, and Cys426 each contribute to the [4Fe-4S] cluster site. Residues 539-548 show a composition bias toward basic and acidic residues; the sequence is REERVREKQS. Residues 539 to 564 are disordered; the sequence is REERVREKQSQQETPATEVTPEELDP.

It belongs to the 4Fe4S bacterial-type ferredoxin family. RnfC subfamily. The complex is composed of six subunits: RnfA, RnfB, RnfC, RnfD, RnfE and RnfG. Requires [4Fe-4S] cluster as cofactor.

The protein resides in the cell inner membrane. Part of a membrane-bound complex that couples electron transfer with translocation of ions across the membrane. This chain is Ion-translocating oxidoreductase complex subunit C, found in Pectobacterium atrosepticum (strain SCRI 1043 / ATCC BAA-672) (Erwinia carotovora subsp. atroseptica).